The sequence spans 170 residues: MGVDQPLGDNFITTSLDSLVNWARKSSIWPMTFGLACCAIEMMATGASHNDLDRFGIIFRASPRQSDCIIIAGTVTKKMLPVIKTVYEQMPEPKWVVAMGACACSGGVFDTYSVVQGIDTALPVDVYIPGCPPRPEALLYGLLKLQDKIMKDKNSFGSTIGLGERLESAA.

[4Fe-4S] cluster is bound by residues cysteine 37, cysteine 38, cysteine 102, and cysteine 131.

Belongs to the complex I 20 kDa subunit family. In terms of assembly, NDH-1 is composed of 14 different subunits. Subunits NuoB, C, D, E, F, and G constitute the peripheral sector of the complex. It depends on [4Fe-4S] cluster as a cofactor.

Its subcellular location is the cell inner membrane. The catalysed reaction is a quinone + NADH + 5 H(+)(in) = a quinol + NAD(+) + 4 H(+)(out). NDH-1 shuttles electrons from NADH, via FMN and iron-sulfur (Fe-S) centers, to quinones in the respiratory chain. The immediate electron acceptor for the enzyme in this species is believed to be ubiquinone. Couples the redox reaction to proton translocation (for every two electrons transferred, four hydrogen ions are translocated across the cytoplasmic membrane), and thus conserves the redox energy in a proton gradient. This Geobacter sulfurreducens (strain ATCC 51573 / DSM 12127 / PCA) protein is NADH-quinone oxidoreductase subunit B.